A 125-amino-acid polypeptide reads, in one-letter code: Small ribosomal subunit protein uS13 (125 aa).

Residues 93–125 (RAGLPVRGQRTRTNARTRRGARKTVAGKKKATR) are disordered. Over residues 101–125 (QRTRTNARTRRGARKTVAGKKKATR) the composition is skewed to basic residues.

Belongs to the universal ribosomal protein uS13 family. In terms of assembly, part of the 30S ribosomal subunit. Forms a loose heterodimer with protein S19. Forms two bridges to the 50S subunit in the 70S ribosome.

In terms of biological role, located at the top of the head of the 30S subunit, it contacts several helices of the 16S rRNA. In the 70S ribosome it contacts the 23S rRNA (bridge B1a) and protein L5 of the 50S subunit (bridge B1b), connecting the 2 subunits; these bridges are implicated in subunit movement. Contacts the tRNAs in the A and P-sites. The sequence is that of Small ribosomal subunit protein uS13 from Synechococcus elongatus (strain ATCC 33912 / PCC 7942 / FACHB-805) (Anacystis nidulans R2).